A 447-amino-acid polypeptide reads, in one-letter code: Tubulin beta chain (447 aa).

Residues Q11, E69, S138, G142, T143, G144, N204, and N226 each contribute to the GTP site. Mg(2+) is bound at residue E69. The tract at residues 424 to 447 (QYQDASISEGEEDYEEEPQVENEE) is disordered. A compositionally biased stretch (acidic residues) spans 432-447 (EGEEDYEEEPQVENEE).

This sequence belongs to the tubulin family. Dimer of alpha and beta chains. A typical microtubule is a hollow water-filled tube with an outer diameter of 25 nm and an inner diameter of 15 nM. Alpha-beta heterodimers associate head-to-tail to form protofilaments running lengthwise along the microtubule wall with the beta-tubulin subunit facing the microtubule plus end conferring a structural polarity. Microtubules usually have 13 protofilaments but different protofilament numbers can be found in some organisms and specialized cells. Mg(2+) is required as a cofactor.

It localises to the cytoplasm. The protein resides in the cytoskeleton. In terms of biological role, tubulin is the major constituent of microtubules, a cylinder consisting of laterally associated linear protofilaments composed of alpha- and beta-tubulin heterodimers. Microtubules grow by the addition of GTP-tubulin dimers to the microtubule end, where a stabilizing cap forms. Below the cap, tubulin dimers are in GDP-bound state, owing to GTPase activity of alpha-tubulin. The protein is Tubulin beta chain of Uncinula necator (Grape powdery mildew).